Reading from the N-terminus, the 59-residue chain is Small, acid-soluble spore protein H 2 (59 aa).

This sequence belongs to the SspH family.

It is found in the spore core. This Bacillus cereus (strain ATCC 14579 / DSM 31 / CCUG 7414 / JCM 2152 / NBRC 15305 / NCIMB 9373 / NCTC 2599 / NRRL B-3711) protein is Small, acid-soluble spore protein H 2 (sspH2).